The following is a 383-amino-acid chain: 8-amino-7-oxononanoate synthase (383 aa).

Arg-21 serves as a coordination point for substrate. 108–109 (GY) contributes to the pyridoxal 5'-phosphate binding site. His-133 serves as a coordination point for substrate. Positions 179, 207, and 233 each coordinate pyridoxal 5'-phosphate. Residue Lys-236 is modified to N6-(pyridoxal phosphate)lysine. Thr-350 lines the substrate pocket.

This sequence belongs to the class-II pyridoxal-phosphate-dependent aminotransferase family. BioF subfamily. Homodimer. Pyridoxal 5'-phosphate is required as a cofactor.

It catalyses the reaction 6-carboxyhexanoyl-[ACP] + L-alanine + H(+) = (8S)-8-amino-7-oxononanoate + holo-[ACP] + CO2. The protein operates within cofactor biosynthesis; biotin biosynthesis. Functionally, catalyzes the decarboxylative condensation of pimeloyl-[acyl-carrier protein] and L-alanine to produce 8-amino-7-oxononanoate (AON), [acyl-carrier protein], and carbon dioxide. The chain is 8-amino-7-oxononanoate synthase from Serratia proteamaculans (strain 568).